The primary structure comprises 201 residues: Natural cytotoxicity triggering receptor 3 (201 aa).

Residues methionine 1–alanine 18 form the signal peptide. Positions leucine 19–valine 126 constitute an Ig-like domain. Residues leucine 19–glycine 135 are Extracellular-facing. An intrachain disulfide couples cysteine 39 to cysteine 108. Asparagine 42 and asparagine 121 each carry an N-linked (GlcNAc...) asparagine glycan. A helical transmembrane segment spans residues alanine 136–valine 156. Residues glycine 157–glycine 201 are Cytoplasmic-facing.

This sequence belongs to the natural cytotoxicity receptor (NCR) family. Homodimer in the unliganted form. Interacts with CD3Z. Interacts with and is activated by binding to NCR3LG1. Interacts with and is activated by binding to BAG6. Interacts with and is inhibited by binding to LGALS3. Selectively expressed by all resting and activated NK cells and weakly expressed in spleen.

Its subcellular location is the cell membrane. Cell membrane receptor of natural killer/NK cells that is activated by binding of extracellular ligands including BAG6 and NCR3LG1. Stimulates NK cells cytotoxicity toward neighboring cells producing these ligands. It controls, for instance, NK cells cytotoxicity against tumor cells. Engagement of NCR3 by BAG6 also promotes myeloid dendritic cells (DC) maturation, both through killing DCs that did not acquire a mature phenotype, and inducing the release by NK cells of TNFA and IFNG which promote DC maturation. The protein is Natural cytotoxicity triggering receptor 3 of Homo sapiens (Human).